A 261-amino-acid chain; its full sequence is UPF0328 protein ECU03_1620 (261 aa).

Belongs to the UPF0328 family.

This Encephalitozoon cuniculi (strain GB-M1) (Microsporidian parasite) protein is UPF0328 protein ECU03_1620.